Consider the following 464-residue polypeptide: Probable 1,4-beta-D-glucan cellobiohydrolase C (464 aa).

Residues Met1–Ala19 form the signal peptide. One can recognise a CBM1 domain in the interval Gln20–Leu55. Disulfide bonds link Cys27-Cys44 and Cys38-Cys54. A thr-rich linker region spans residues Thr59 to Thr102. Residues Ser65 to Thr100 are compositionally biased toward low complexity. Residues Ser65 to Asn108 form a disordered region. Residues Gly103 to Phe464 form a catalytic region. Asp194 is an active-site residue. 2 disulfide bridges follow: Cys195–Cys254 and Cys386–Cys433. The active-site Proton donor is Asp240. Residue Asp419 is the Nucleophile of the active site.

The protein belongs to the glycosyl hydrolase 6 (cellulase B) family.

It is found in the secreted. The catalysed reaction is Hydrolysis of (1-&gt;4)-beta-D-glucosidic linkages in cellulose and cellotetraose, releasing cellobiose from the non-reducing ends of the chains.. Functionally, the biological conversion of cellulose to glucose generally requires three types of hydrolytic enzymes: (1) Endoglucanases which cut internal beta-1,4-glucosidic bonds; (2) Exocellobiohydrolases that cut the disaccharide cellobiose from the non-reducing end of the cellulose polymer chain; (3) Beta-1,4-glucosidases which hydrolyze the cellobiose and other short cello-oligosaccharides to glucose. This is Probable 1,4-beta-D-glucan cellobiohydrolase C (cbhC) from Aspergillus clavatus (strain ATCC 1007 / CBS 513.65 / DSM 816 / NCTC 3887 / NRRL 1 / QM 1276 / 107).